A 636-amino-acid polypeptide reads, in one-letter code: Biosynthetic arginine decarboxylase (636 aa).

Position 110 is an N6-(pyridoxal phosphate)lysine (K110). Position 290-300 (290-300 (IDVGGGLGVDY)) interacts with substrate.

It belongs to the Orn/Lys/Arg decarboxylase class-II family. SpeA subfamily. Requires Mg(2+) as cofactor. The cofactor is pyridoxal 5'-phosphate.

The enzyme catalyses L-arginine + H(+) = agmatine + CO2. Its function is as follows. Catalyzes the biosynthesis of agmatine from arginine. The protein is Biosynthetic arginine decarboxylase of Pseudomonas aeruginosa (strain ATCC 15692 / DSM 22644 / CIP 104116 / JCM 14847 / LMG 12228 / 1C / PRS 101 / PAO1).